Reading from the N-terminus, the 465-residue chain is Hexokinase-4 (465 aa).

The 445-residue stretch at 10-454 (ATKKEKVEQI…SGRGAALVSA (445 aa)) folds into the Hexokinase domain. The segment at 67–203 (EGSEVGDFLS…DFEMDVVAMV (137 aa)) is hexokinase small subdomain. 78-83 (DLGGTN) contacts ATP. Substrate is bound by residues 151 to 152 (SF), 168 to 169 (TK), and 204 to 205 (ND). The segment at 204 to 443 (NDTVATMISC…CEITFIESEE (240 aa)) is hexokinase large subdomain. An ATP-binding site is contributed by T228. Positions 231, 256, and 290 each coordinate substrate. Residues 295–296 (GK), 332–336 (TRFVS), and 411–415 (SVYKL) contribute to the ATP site.

It belongs to the hexokinase family. Monomer. Interacts with MIDN; the interaction occurs preferentially at low glucose levels and results in inhibition of hexokinase activity. Interacts with GCKR; leading to sequestration in the nucleus. In terms of tissue distribution, expression is restricted to the liver and pancreatic islets (at protein level).

The protein resides in the cytoplasm. Its subcellular location is the nucleus. The protein localises to the mitochondrion. It carries out the reaction a D-hexose + ATP = a D-hexose 6-phosphate + ADP + H(+). The catalysed reaction is D-fructose + ATP = D-fructose 6-phosphate + ADP + H(+). The enzyme catalyses D-glucose + ATP = D-glucose 6-phosphate + ADP + H(+). It catalyses the reaction D-mannose + ATP = D-mannose 6-phosphate + ADP + H(+). Its pathway is carbohydrate metabolism; hexose metabolism. The protein operates within carbohydrate degradation; glycolysis; D-glyceraldehyde 3-phosphate and glycerone phosphate from D-glucose: step 1/4. Subject to allosteric regulation. Low glucose and high fructose-6-phosphate triggers association with the inhibitor GCKR followed by sequestration in the nucleus. Its function is as follows. Catalyzes the phosphorylation of hexose, such as D-glucose, D-fructose and D-mannose, to hexose 6-phosphate (D-glucose 6-phosphate, D-fructose 6-phosphate and D-mannose 6-phosphate, respectively). Compared to other hexokinases, has a weak affinity for D-glucose, and is effective only when glucose is abundant. Mainly expressed in pancreatic beta cells and the liver and constitutes a rate-limiting step in glucose metabolism in these tissues. Since insulin secretion parallels glucose metabolism and the low glucose affinity of GCK ensures that it can change its enzymatic activity within the physiological range of glucose concentrations, GCK acts as a glucose sensor in the pancreatic beta cell. In pancreas, plays an important role in modulating insulin secretion. In liver, helps to facilitate the uptake and conversion of glucose by acting as an insulin-sensitive determinant of hepatic glucose usage. Required to provide D-glucose 6-phosphate for the synthesis of glycogen. Mediates the initial step of glycolysis by catalyzing phosphorylation of D-glucose to D-glucose 6-phosphate. The polypeptide is Hexokinase-4 (Rattus norvegicus (Rat)).